A 276-amino-acid polypeptide reads, in one-letter code: L-aminoadipate-semialdehyde dehydrogenase-phosphopantetheinyl transferase (276 aa).

It belongs to the P-Pant transferase superfamily. AcpS family.

It catalyses the reaction apo-[ACP] + CoA = holo-[ACP] + adenosine 3',5'-bisphosphate + H(+). Catalyzes the transfer of a 4'-phosphopantetheine moiety from coenzyme A to a serine residue of acceptor proteins, such as alpha-aminoadipate reductase. Necessary for alpha-aminoadipate reductase activity. This Eremothecium gossypii (strain ATCC 10895 / CBS 109.51 / FGSC 9923 / NRRL Y-1056) (Yeast) protein is L-aminoadipate-semialdehyde dehydrogenase-phosphopantetheinyl transferase (LYS5).